The primary structure comprises 259 residues: 5'-nucleotidase SurE (259 aa).

A divalent metal cation contacts are provided by Asp8, Asp9, Ser40, and Asn92.

The protein belongs to the SurE nucleotidase family. Requires a divalent metal cation as cofactor.

It localises to the cytoplasm. The catalysed reaction is a ribonucleoside 5'-phosphate + H2O = a ribonucleoside + phosphate. In terms of biological role, nucleotidase that shows phosphatase activity on nucleoside 5'-monophosphates. The protein is 5'-nucleotidase SurE of Xanthomonas oryzae pv. oryzae (strain MAFF 311018).